The chain runs to 108 residues: Tetrahydromethanopterin S-methyltransferase subunit B (108 aa).

A helical transmembrane segment spans residues 80–100 (AFYGIVVGLAFSGLLALIIFI).

The protein belongs to the MtrB family. As to quaternary structure, the complex is composed of 8 subunits; MtrA, MtrB, MtrC, MtrD, MtrE, MtrF, MtrG and MtrH.

Its subcellular location is the cell membrane. It catalyses the reaction 5-methyl-5,6,7,8-tetrahydromethanopterin + coenzyme M + 2 Na(+)(in) = 5,6,7,8-tetrahydromethanopterin + methyl-coenzyme M + 2 Na(+)(out). It participates in one-carbon metabolism; methanogenesis from CO(2); methyl-coenzyme M from 5,10-methylene-5,6,7,8-tetrahydromethanopterin: step 2/2. Its function is as follows. Part of a complex that catalyzes the formation of methyl-coenzyme M and tetrahydromethanopterin from coenzyme M and methyl-tetrahydromethanopterin. This is an energy-conserving, sodium-ion translocating step. This chain is Tetrahydromethanopterin S-methyltransferase subunit B, found in Methanosarcina acetivorans (strain ATCC 35395 / DSM 2834 / JCM 12185 / C2A).